A 241-amino-acid polypeptide reads, in one-letter code: Large ribosomal subunit protein uL30 (241 aa).

The interval 1–25 (MASTLKPETLVKKSKAQQKTAEERA) is disordered.

Belongs to the universal ribosomal protein uL30 family.

The chain is Large ribosomal subunit protein uL30 (RPL7) from Debaryomyces hansenii (strain ATCC 36239 / CBS 767 / BCRC 21394 / JCM 1990 / NBRC 0083 / IGC 2968) (Yeast).